The primary structure comprises 748 residues: Disintegrin and metalloproteinase domain-containing protein 10 (748 aa).

An N-terminal signal peptide occupies residues 1-19; the sequence is MVLLRVLILLLSWVAGLGG. The propeptide occupies 20 to 213; the sequence is QYGNPLNKYI…NGPELLRKKR (194 aa). Residues 20 to 672 lie on the Extracellular side of the membrane; the sequence is QYGNPLNKYI…SPELYENIAE (653 aa). Residues 171-178 carry the Cysteine switch motif; it reads GGCADHSV. Residue Cys-173 coordinates Zn(2+). Residues 220 to 456 form the Peptidase M12B domain; that stretch reads NTCQLYIQTD…KRNNCFVESG (237 aa). N-linked (GlcNAc...) asparagine glycans are attached at residues Asn-267 and Asn-278. Disulfide bonds link Cys-344–Cys-451, Cys-399–Cys-435, Cys-460–Cys-495, Cys-471–Cys-484, Cys-473–Cys-479, Cys-483–Cys-515, Cys-503–Cys-511, Cys-510–Cys-536, Cys-524–Cys-543, Cys-530–Cys-562, Cys-555–Cys-567, Cys-572–Cys-598, Cys-580–Cys-607, Cys-582–Cys-597, Cys-594–Cys-639, and Cys-632–Cys-645. His-383 contacts Zn(2+). Glu-384 is a catalytic residue. Positions 387 and 393 each coordinate Zn(2+). N-linked (GlcNAc...) asparagine glycosylation is present at Asn-439. One can recognise a Disintegrin domain in the interval 457–551; it reads QPICGNGMVE…LCPASDPKPN (95 aa). A glycan (N-linked (GlcNAc...) asparagine) is linked at Asn-551. Residues 673–696 traverse the membrane as a helical segment; it reads WIVAYWWAVLLMGIALIMLMAGFI. Over 697 to 748 the chain is Cytoplasmic; sequence KICSVHTPSSNPKLPPPKPLPGTLKRRRPPQPIQQPQRQRPRESYQMGHMRR. The tract at residues 704-748 is disordered; the sequence is PSSNPKLPPPKPLPGTLKRRRPPQPIQQPQRQRPRESYQMGHMRR. Positions 708–715 match the SH3-binding motif; that stretch reads PKLPPPKP. Residue Thr-719 is modified to Phosphothreonine. The SH3-binding motif lies at 722–728; the sequence is RRRPPQP. The interaction with AP2A1, AP2A2 and AP2M1 stretch occupies residues 734–748; sequence RQRPRESYQMGHMRR.

In terms of assembly, forms a ternary EFNA5-EPHA3-ADAM10 complex mediating EFNA5 extracellular domain shedding by ADAM10 which regulates the EFNA5-EPHA3 complex internalization and function, the cleavage occurs in trans, with ADAM10 and its substrate being on the membranes of opposing cells. Interacts with the clathrin adapter AP2 complex subunits AP2A1, AP2A2, AP2B1, and AP2M1; this interaction facilitates ADAM10 endocytosis from the plasma membrane during long-term potentiation in hippocampal neurons. Forms a ternary complex composed of ADAM10, EPHA4 and CADH1; within the complex, ADAM10 cleaves CADH1 which disrupts adherens junctions. Interacts with EPHA2. Interacts with NGF in a divalent cation-dependent manner. Interacts with TSPAN14; the interaction promotes ADAM10 maturation and cell surface expression. Interacts with TSPAN5, TSPAN10, TSPAN14, TSPAN15, TSPAN17 and TSPAN33; these interactions regulate ADAM10 substrate specificity, endocytosis and turnover. Interacts (via extracellular domain) with TSPAN33 (via extracellular domain) and (via cytoplasmic domain) with AFDN; interaction with TSPAN33 allows the docking of ADAM10 to zonula adherens through a PDZ11-dependent interaction between TSPAN33 and PLEKHA7 while interaction with AFDN locks ADAM10 at zonula adherens. Interacts with DLG1; this interaction recruits ADAM10 to the cell membrane during long-term depression in hippocampal neurons. Interacts (via extracellular domain) with BACE1 (via extracellular domain). Interacts with FAM171A1. The cofactor is Zn(2+). The precursor is cleaved by furin and PCSK7. As to expression, expressed at low level in kidney, spleen, lung, adrenal, heart and peripheral nerve.

It is found in the golgi apparatus membrane. It localises to the cell membrane. The protein localises to the cytoplasmic vesicle. Its subcellular location is the clathrin-coated vesicle. The protein resides in the cell projection. It is found in the axon. It localises to the dendrite. The protein localises to the cell junction. Its subcellular location is the adherens junction. The protein resides in the cytoplasm. It carries out the reaction Endopeptidase of broad specificity.. Its activity is regulated as follows. Catalytically inactive when the propeptide is intact and associated with the mature enzyme. The disintegrin and cysteine-rich regions modulate access of substrates to exerts an inhibitory effect on the cleavage of ADAM10 substrates. Its function is as follows. Transmembrane metalloprotease which mediates the ectodomain shedding of a myriad of transmembrane proteins, including adhesion proteins, growth factor precursors and cytokines being essential for development and tissue homeostasis. Associates with six members of the tetraspanin superfamily TspanC8 which regulate its exit from the endoplasmic reticulum and its substrate selectivity. Cleaves the membrane-bound precursor of TNF-alpha at '76-Ala-|-Val-77' to its mature soluble form. Responsible for the proteolytical release of soluble JAM3 from endothelial cells surface. Responsible for the proteolytic release of several other cell-surface proteins, including heparin-binding epidermal growth-like factor, ephrin-A2, CD44, CDH2 and for constitutive and regulated alpha-secretase cleavage of amyloid precursor protein (APP). Contributes to the normal cleavage of the cellular prion protein. Involved in the cleavage of the adhesion molecule L1 at the cell surface and in released membrane vesicles, suggesting a vesicle-based protease activity. Also controls the proteolytic processing of Notch and mediates lateral inhibition during neurogenesis. Required for the development of type 1 transitional B cells into marginal zone B cells, probably by cleaving Notch. Responsible for the FasL ectodomain shedding and for the generation of the remnant ADAM10-processed FasL (FasL APL) transmembrane form. Also cleaves the ectodomain of the integral membrane proteins CORIN and ITM2B. Mediates the proteolytic cleavage of LAG3, leading to release the secreted form of LAG3. Mediates the proteolytic cleavage of IL6R and IL11RA, leading to the release of secreted forms of IL6R and IL11RA. Enhances the cleavage of CHL1 by BACE1. Cleaves NRCAM. Cleaves TREM2, resulting in shedding of the TREM2 ectodomain. Involved in the development and maturation of glomerular and coronary vasculature. During development of the cochlear organ of Corti, promotes pillar cell separation by forming a ternary complex with CADH1 and EPHA4 and cleaving CADH1 at adherens junctions. May regulate the EFNA5-EPHA3 signaling. Regulates leukocyte transmigration as a sheddase for the adherens junction protein VE-cadherin/CDH5 in endothelial cells. The protein is Disintegrin and metalloproteinase domain-containing protein 10 (ADAM10) of Bos taurus (Bovine).